Here is a 281-residue protein sequence, read N- to C-terminus: MKNFVSMHAILLACSAGAGLAAITQGISEGTYSRIVEMATISQAAYANLCNIPSTITSAGKIYNAETDINGWVLRDDSRQEIITVFRGTGSDTNLQLDTNYTQAPFDTLPQCSGCAVHGGYYVGWISVKDQVEGLVQQQASQYPDYSLVITGHSLGASMAAITAAQLSATYNNITVYTFGEPRTGNQAYASYVDETFQATNPDATKFYRVTHTNDGIPNLPPTSQGYVHHGTEYWSVEPHGPQNMYLCLGDEVQCCEAQGGQGVNDAHVTYFGMASGACTW.

The signal sequence occupies residues 1–21; that stretch reads MKNFVSMHAILLACSAGAGLA. Cystine bridges form between C50–C279, C112–C115, and C248–C255. D98 contributes to the substrate binding site. Residue N100 is glycosylated (N-linked (GlcNAc...) asparagine). A substrate-binding site is contributed by Y101. Residue S154 is the Nucleophile of the active site. N173 carries N-linked (GlcNAc...) asparagine glycosylation. Catalysis depends on D215, which acts as the Charge relay system. H268 is a binding site for substrate. H268 (charge relay system) is an active-site residue.

This sequence belongs to the AB hydrolase superfamily. FaeA family.

It localises to the secreted. The enzyme catalyses feruloyl-polysaccharide + H2O = ferulate + polysaccharide.. Functionally, involved in degradation of plant cell walls. Hydrolyzes the feruloyl-arabinose ester bond in arabinoxylans, and the feruloyl-galactose ester bond in pectin. The polypeptide is Probable feruloyl esterase A (faeA) (Aspergillus flavus (strain ATCC 200026 / FGSC A1120 / IAM 13836 / NRRL 3357 / JCM 12722 / SRRC 167)).